The following is a 457-amino-acid chain: tRNA modification GTPase MnmE (457 aa).

3 residues coordinate (6S)-5-formyl-5,6,7,8-tetrahydrofolate: Arg-25, Glu-87, and Arg-126. In terms of domain architecture, TrmE-type G spans 223–377 (GISTAIIGRP…IEERINNLFF (155 aa)). Asn-233 contributes to the K(+) binding site. Residues 233 to 238 (NVGKSS), 252 to 258 (TDIAGTT), and 277 to 280 (DTAG) contribute to the GTP site. Ser-237 is a binding site for Mg(2+). 3 residues coordinate K(+): Thr-252, Ile-254, and Thr-257. Thr-258 contributes to the Mg(2+) binding site. Lys-457 contributes to the (6S)-5-formyl-5,6,7,8-tetrahydrofolate binding site.

This sequence belongs to the TRAFAC class TrmE-Era-EngA-EngB-Septin-like GTPase superfamily. TrmE GTPase family. As to quaternary structure, homodimer. Heterotetramer of two MnmE and two MnmG subunits. The cofactor is K(+).

Its subcellular location is the cytoplasm. Functionally, exhibits a very high intrinsic GTPase hydrolysis rate. Involved in the addition of a carboxymethylaminomethyl (cmnm) group at the wobble position (U34) of certain tRNAs, forming tRNA-cmnm(5)s(2)U34. The polypeptide is tRNA modification GTPase MnmE (Streptococcus pneumoniae serotype 4 (strain ATCC BAA-334 / TIGR4)).